The following is a 197-amino-acid chain: Probable GTP-binding protein EngB (197 aa).

The EngB-type G domain occupies 22–197; that stretch reads TGVEVAFAGR…FKEKLDTWYQ (176 aa). GTP-binding positions include 30–37, 57–61, 75–78, 142–145, and 177–179; these read GRSNAGKS, GRTQL, DLPG, TKAD, and FSS. Serine 37 and threonine 59 together coordinate Mg(2+).

This sequence belongs to the TRAFAC class TrmE-Era-EngA-EngB-Septin-like GTPase superfamily. EngB GTPase family. The cofactor is Mg(2+).

Its function is as follows. Necessary for normal cell division and for the maintenance of normal septation. The chain is Probable GTP-binding protein EngB from Francisella tularensis subsp. tularensis (strain FSC 198).